The sequence spans 229 residues: Flagellar L-ring protein (229 aa).

A signal peptide spans 1-23; sequence MLSRLGARVLYCLAGLALLASGG. Cysteine 24 carries the N-palmitoyl cysteine lipid modification. Cysteine 24 carries S-diacylglycerol cysteine lipidation.

This sequence belongs to the FlgH family. The basal body constitutes a major portion of the flagellar organelle and consists of four rings (L,P,S, and M) mounted on a central rod.

Its subcellular location is the cell outer membrane. The protein resides in the bacterial flagellum basal body. In terms of biological role, assembles around the rod to form the L-ring and probably protects the motor/basal body from shearing forces during rotation. The protein is Flagellar L-ring protein of Cupriavidus pinatubonensis (strain JMP 134 / LMG 1197) (Cupriavidus necator (strain JMP 134)).